Here is a 154-residue protein sequence, read N- to C-terminus: Flagellar assembly factor FliW (154 aa).

It belongs to the FliW family. In terms of assembly, interacts with translational regulator CsrA and flagellin(s).

It localises to the cytoplasm. In terms of biological role, acts as an anti-CsrA protein, binds CsrA and prevents it from repressing translation of its target genes, one of which is flagellin. Binds to flagellin and participates in the assembly of the flagellum. The sequence is that of Flagellar assembly factor FliW from Carboxydothermus hydrogenoformans (strain ATCC BAA-161 / DSM 6008 / Z-2901).